Consider the following 185-residue polypeptide: Ribosome-recycling factor (185 aa).

The interval 145-164 (DGEAGEDEVSRAEKDLDKTT) is disordered.

Belongs to the RRF family.

Its subcellular location is the cytoplasm. Functionally, responsible for the release of ribosomes from messenger RNA at the termination of protein biosynthesis. May increase the efficiency of translation by recycling ribosomes from one round of translation to another. This is Ribosome-recycling factor from Mycobacterium sp. (strain JLS).